A 147-amino-acid chain; its full sequence is Hemoglobin subunit epsilon (147 aa).

The Globin domain occupies 3-147; it reads HWSAEEKQLI…VAHALARKYH (145 aa). Positions 64 and 93 each coordinate heme b.

This sequence belongs to the globin family. In terms of assembly, heterotetramer of two epsilon chains and two alpha chains. Hemoglobin E (Hbe) contains a alpha-A chains while hemoglobin M (Hbm) contains alpha-D chains.

Beta-type chain found in early embryos. In Gallus gallus (Chicken), this protein is Hemoglobin subunit epsilon (HBE).